The chain runs to 523 residues: Pentatricopeptide repeat-containing protein At3g21470 (523 aa).

13 PPR repeats span residues 10 to 43 (GEFH…RGVY), 44 to 79 (FPGW…GVCS), 80 to 114 (DVMV…NVAT), 115 to 141 (WNAM…ISVC), 143 to 173 (NTVT…MPFE), 176 to 210 (NVKA…NAFV), 211 to 237 (WSLM…VFAR), 238 to 272 (DLVI…GYEP), 273 to 307 (DAVT…GIEL), 308 to 338 (NQFV…ISVR), 339 to 373 (SVAC…DLKP), 374 to 408 (DEIT…DVKP), and 409 to 439 (NVKH…MHVK). The segment at 444–523 (VLGALLGACK…SPGLSSLVLT (80 aa)) is type E motif.

Belongs to the PPR family. PCMP-E subfamily.

The chain is Pentatricopeptide repeat-containing protein At3g21470 (PCMP-E29) from Arabidopsis thaliana (Mouse-ear cress).